The sequence spans 270 residues: 4-hydroxy-tetrahydrodipicolinate reductase (270 aa).

Residues 8-13 and Glu34 each bind NAD(+); that span reads GAAGRM. Residue Arg35 participates in NADP(+) binding. NAD(+) is bound by residues 98–100 and 122–125; these read GST and SPNM. His155 functions as the Proton donor/acceptor in the catalytic mechanism. Position 156 (His156) interacts with (S)-2,3,4,5-tetrahydrodipicolinate. Lys159 functions as the Proton donor in the catalytic mechanism. 165–166 lines the (S)-2,3,4,5-tetrahydrodipicolinate pocket; it reads GT.

It belongs to the DapB family.

It is found in the cytoplasm. It catalyses the reaction (S)-2,3,4,5-tetrahydrodipicolinate + NAD(+) + H2O = (2S,4S)-4-hydroxy-2,3,4,5-tetrahydrodipicolinate + NADH + H(+). The catalysed reaction is (S)-2,3,4,5-tetrahydrodipicolinate + NADP(+) + H2O = (2S,4S)-4-hydroxy-2,3,4,5-tetrahydrodipicolinate + NADPH + H(+). It participates in amino-acid biosynthesis; L-lysine biosynthesis via DAP pathway; (S)-tetrahydrodipicolinate from L-aspartate: step 4/4. Its function is as follows. Catalyzes the conversion of 4-hydroxy-tetrahydrodipicolinate (HTPA) to tetrahydrodipicolinate. This chain is 4-hydroxy-tetrahydrodipicolinate reductase, found in Anaeromyxobacter dehalogenans (strain 2CP-1 / ATCC BAA-258).